The primary structure comprises 388 residues: Chorismate synthase (388 aa).

Positions 39 and 45 each coordinate NADP(+). The tract at residues 95–118 is disordered; the sequence is EKNEKSRRVSRPRPGHADLVGGMK. FMN contacts are provided by residues 130 to 132, 251 to 252, Gly-296, 311 to 315, and Arg-337; these read RSS, NA, and KPIPT.

It belongs to the chorismate synthase family. Homotetramer. FMNH2 serves as cofactor.

It carries out the reaction 5-O-(1-carboxyvinyl)-3-phosphoshikimate = chorismate + phosphate. It participates in metabolic intermediate biosynthesis; chorismate biosynthesis; chorismate from D-erythrose 4-phosphate and phosphoenolpyruvate: step 7/7. Catalyzes the anti-1,4-elimination of the C-3 phosphate and the C-6 proR hydrogen from 5-enolpyruvylshikimate-3-phosphate (EPSP) to yield chorismate, which is the branch point compound that serves as the starting substrate for the three terminal pathways of aromatic amino acid biosynthesis. This reaction introduces a second double bond into the aromatic ring system. This Listeria monocytogenes serovar 1/2a (strain ATCC BAA-679 / EGD-e) protein is Chorismate synthase.